Consider the following 523-residue polypeptide: UDP-glucuronosyltransferase 2B16 (523 aa).

The first 16 residues, 1 to 16 (LLLLLQLSCCFSSGSC), serve as a signal peptide directing secretion. Position 129 is an N6-succinyllysine (Lys-129). Residue Asn-309 is glycosylated (N-linked (GlcNAc...) asparagine). The chain crosses the membrane as a helical span at residues 487–503 (VIGFLLACLTITTYLVI).

The protein belongs to the UDP-glycosyltransferase family.

It is found in the microsome membrane. It localises to the endoplasmic reticulum membrane. It carries out the reaction glucuronate acceptor + UDP-alpha-D-glucuronate = acceptor beta-D-glucuronoside + UDP + H(+). In terms of biological role, UDPGT is of major importance in the conjugation and subsequent elimination of potentially toxic xenobiotics and endogenous compounds. Acts on small phenolic agents such as 2-beta-naphthol and 4-methylumbelliferone as well as bulky phenolic compounds like 2-hydroxy- and 4-hydroxybiphenyl. In contrast to 2B13 it is active toward 4-hydroxyesterone. This chain is UDP-glucuronosyltransferase 2B16 (UGT2B16), found in Oryctolagus cuniculus (Rabbit).